Consider the following 355-residue polypeptide: MLASKLDPFLKRFEELNSLLSSSDILNDISKMTTLSKEQKNLEPIVLKAKEYLKTLDNIEENKALLNDPELGELAKEELKTLEELKPKLEEEIKILLLPKDPNDERNIFLEIRAGTGGDEASLFVGDLVKAYARYAENRGYKLEIVSSSEGSVGGFKEIIMLVKGTGAYSRLKYEGGTHRVQRVPQTESQGRVHTSAITVAVMPEVDDIEIEINPNDLKVDVMRSSGHGGQSVNTTDSAVRITHIPTGIVVVNQDGKSQHKNKESAMKVLKARLYEMQESERLAKESEARKSQVGSGDRSERIRTYNFPQNRISDHRINLTLYRLDAIMQDGLFDEIIEPLITHHQAQALQEQNL.

The residue at position 231 (glutamine 231) is an N5-methylglutamine. Positions 280 to 291 (SERLAKESEARK) are enriched in basic and acidic residues. The disordered stretch occupies residues 280–303 (SERLAKESEARKSQVGSGDRSERI).

Belongs to the prokaryotic/mitochondrial release factor family. Post-translationally, methylated by PrmC. Methylation increases the termination efficiency of RF1.

It is found in the cytoplasm. In terms of biological role, peptide chain release factor 1 directs the termination of translation in response to the peptide chain termination codons UAG and UAA. This chain is Peptide chain release factor 1, found in Campylobacter jejuni subsp. jejuni serotype O:6 (strain 81116 / NCTC 11828).